The following is a 456-amino-acid chain: Choline kinase (456 aa).

It belongs to the choline/ethanolamine kinase family. In terms of assembly, monomer. Mg(2+) is required as a cofactor.

The protein resides in the cytoplasm. Its subcellular location is the nucleus. It catalyses the reaction choline + ATP = phosphocholine + ADP + H(+). Its pathway is phospholipid metabolism; phosphatidylcholine biosynthesis; phosphocholine from choline: step 1/1. In terms of biological role, catalyzes the committed step in the synthesis of phosphatidylcholine by the CDP-choline pathway. The sequence is that of Choline kinase from Schizosaccharomyces pombe (strain 972 / ATCC 24843) (Fission yeast).